The following is a 150-amino-acid chain: Bcl-2-interacting killer (150 aa).

The BH3 signature appears at 51 to 65 (VALRLACIGDEMDLC). A helical membrane pass occupies residues 127–147 (PGQLFPMVLLVFLLLGGAWYL). The segment at 127–148 (PGQLFPMVLLVFLLLGGAWYLQ) is leucine-zipper.

Interacts with RHBDL4/RHBDD1. Interacts with BCL2L10/BCL-B. Proteolytically cleaved by RHBDL4/RHBDD1. RHBDL4/RHBDD1-induced cleavage is a necessary step prior its degradation by the proteosome-dependent mechanism. In terms of processing, ubiquitinated by the ECS(ASB11) complex in response to endoplasmic reticulum stress, leading to substrate recognition by the segregase p97/VCP and degradation by the proteasome. In terms of tissue distribution, expressed in testis, kidney, liver, lung and heart.

Its subcellular location is the endomembrane system. The protein resides in the mitochondrion membrane. Accelerates programmed cell death. Binding to the apoptosis repressors Bcl-X(L), BHRF1 or Bcl-2 suppresses this death-promoting activity. The chain is Bcl-2-interacting killer (Bik) from Mus musculus (Mouse).